The following is a 128-amino-acid chain: 3-aminoacrylate deaminase RutC (128 aa).

This sequence belongs to the RutC family. In terms of assembly, homotrimer.

It catalyses the reaction (Z)-3-aminoacrylate + H2O + H(+) = 3-oxopropanoate + NH4(+). In terms of biological role, involved in pyrimidine catabolism. Catalyzes the deamination of 3-aminoacrylate to malonic semialdehyde, a reaction that can also occur spontaneously. RutC may facilitate the reaction and modulate the metabolic fitness, rather than catalyzing essential functions. This is 3-aminoacrylate deaminase RutC from Escherichia coli O111:H- (strain 11128 / EHEC).